A 550-amino-acid chain; its full sequence is Chaperonin GroEL (550 aa).

ATP is bound by residues 30–33 (TLGP), K51, 87–91 (DGTTT), G415, and D497.

Belongs to the chaperonin (HSP60) family. Forms a cylinder of 14 subunits composed of two heptameric rings stacked back-to-back. Interacts with the co-chaperonin GroES.

It localises to the cytoplasm. The catalysed reaction is ATP + H2O + a folded polypeptide = ADP + phosphate + an unfolded polypeptide.. Its function is as follows. Together with its co-chaperonin GroES, plays an essential role in assisting protein folding. The GroEL-GroES system forms a nano-cage that allows encapsulation of the non-native substrate proteins and provides a physical environment optimized to promote and accelerate protein folding. The chain is Chaperonin GroEL from Yersinia enterocolitica serotype O:8 / biotype 1B (strain NCTC 13174 / 8081).